We begin with the raw amino-acid sequence, 85 residues long: uncharacterized protein (85 aa).

The next 2 membrane-spanning stretches (helical) occupy residues 20–42 and 52–69; these read IYWFFCLYYKDGPILYTIYTTFL and IILRNTVAFLSFMYKHYY.

The protein localises to the membrane. This is an uncharacterized protein from Saccharomyces cerevisiae (strain ATCC 204508 / S288c) (Baker's yeast).